The sequence spans 351 residues: Translation initiation factor eIF2B subunit beta (351 aa).

It belongs to the eIF-2B alpha/beta/delta subunits family. In terms of assembly, component of the translation initiation factor 2B (eIF2B) complex which is a heterodecamer of two sets of five different subunits: alpha, beta, gamma, delta and epsilon. Subunits alpha, beta and delta comprise a regulatory subcomplex and subunits epsilon and gamma comprise a catalytic subcomplex. Within the complex, the hexameric regulatory complex resides at the center, with the two heterodimeric catalytic subcomplexes bound on opposite sides.

Its subcellular location is the cytoplasm. It localises to the cytosol. Its activity is regulated as follows. Activated by the chemical integrated stress response (ISR) inhibitor ISRIB which stimulates guanine nucleotide exchange factor activity for both phosphorylated and unphosphorylated eIF2. Its function is as follows. Acts as a component of the translation initiation factor 2B (eIF2B) complex, which catalyzes the exchange of GDP for GTP on eukaryotic initiation factor 2 (eIF2) gamma subunit. Its guanine nucleotide exchange factor activity is repressed when bound to eIF2 complex phosphorylated on the alpha subunit, thereby limiting the amount of methionyl-initiator methionine tRNA available to the ribosome and consequently global translation is repressed. The chain is Translation initiation factor eIF2B subunit beta (EIF2B2) from Oryctolagus cuniculus (Rabbit).